The following is a 140-amino-acid chain: Nucleoside diphosphate kinase (140 aa).

ATP contacts are provided by K11, F59, R87, T93, R104, and N114. The active-site Pros-phosphohistidine intermediate is the H117.

The protein belongs to the NDK family. Homotetramer. Requires Mg(2+) as cofactor.

It localises to the cytoplasm. The enzyme catalyses a 2'-deoxyribonucleoside 5'-diphosphate + ATP = a 2'-deoxyribonucleoside 5'-triphosphate + ADP. It carries out the reaction a ribonucleoside 5'-diphosphate + ATP = a ribonucleoside 5'-triphosphate + ADP. Major role in the synthesis of nucleoside triphosphates other than ATP. The ATP gamma phosphate is transferred to the NDP beta phosphate via a ping-pong mechanism, using a phosphorylated active-site intermediate. The chain is Nucleoside diphosphate kinase from Acidiphilium cryptum (strain JF-5).